Reading from the N-terminus, the 81-residue chain is Neuronatin (81 aa).

This sequence belongs to the neuronatin family.

Functionally, may participate in the maintenance of segment identity in the hindbrain and pituitary development, and maturation or maintenance of the overall structure of the nervous system. May function as a regulatory subunit of ion channels. This chain is Neuronatin (NNAT), found in Sus scrofa (Pig).